The sequence spans 271 residues: MTLAAQPHVLAVEVDIGTHETAKFLGLTWHWDTILTSVIAGVIVVGLGLYMRWTARSGVPSKMQLLFEMLVSWVNRQVEESMGLRVAPFVAPMAVTLFVYILLCNWIGVLPSGHPEHLPAPTADINLTLTLALVVIVPMHIVSLKRRGLGRYIRHYFEPYKIFFPINVVEELAKPITLALRLFGNIFSGAIMVSLLALMPPYVLWLPQWLWKLIDLGVGVIQAFIFALLTILYYAFATATGGHGASDEHADGGDSSSRQASPTPLPAGQVR.

The next 5 helical transmembrane spans lie at 31–51 (WDTI…GLYM), 89–109 (FVAP…WIGV), 124–144 (DINL…IVSL), 186–206 (IFSG…VLWL), and 216–236 (LGVG…YYAF). Residues 247–271 (DEHADGGDSSSRQASPTPLPAGQVR) form a disordered region.

The protein belongs to the ATPase A chain family. F-type ATPases have 2 components, CF(1) - the catalytic core - and CF(0) - the membrane proton channel. CF(1) has five subunits: alpha(3), beta(3), gamma(1), delta(1), epsilon(1). CF(0) has three main subunits: a(1), b(2) and c(9-12). The alpha and beta chains form an alternating ring which encloses part of the gamma chain. CF(1) is attached to CF(0) by a central stalk formed by the gamma and epsilon chains, while a peripheral stalk is formed by the delta and b chains.

It localises to the cell membrane. Functionally, key component of the proton channel; it plays a direct role in the translocation of protons across the membrane. The protein is ATP synthase subunit a of Acidothermus cellulolyticus (strain ATCC 43068 / DSM 8971 / 11B).